Consider the following 238-residue polypeptide: MKKTVVASTLAVGLGVTGFAAGNSADASEQGVDKAQLAQQAQSNPESLNEAPVQDGAYNINFNYNNTDYSFQSDGQYWTWSYGQGSTNAPAQETAEQPQQVEQPQQTEQASTEQPAEEAAPQTEETQQPQQEATTQTTSSSNESTSNESSSSEASEGSSVNVNSHLQAIAQRESGGDLKAVNPSSGAAGKYQFLQSTWDSVAPSEYQGVSPTEAPEAVQDAAAVKLYNTAGASQWVTA.

The N-terminal stretch at 1-27 (MKKTVVASTLAVGLGVTGFAAGNSADA) is a signal peptide. The tract at residues 82–161 (YGQGSTNAPA…SEASEGSSVN (80 aa)) is disordered. Low complexity predominate over residues 89–156 (APAQETAEQP…NESSSSEASE (68 aa)).

It belongs to the transglycosylase family. SceD subfamily.

It localises to the secreted. Is able to cleave peptidoglycan and affects clumping and separation of bacterial cells. The chain is Probable transglycosylase SceD 3 (sceD3) from Staphylococcus saprophyticus subsp. saprophyticus (strain ATCC 15305 / DSM 20229 / NCIMB 8711 / NCTC 7292 / S-41).